Consider the following 238-residue polypeptide: uncharacterized protein (238 aa).

The next 7 helical transmembrane spans lie at 15-37, 50-69, 79-96, 101-118, 128-150, 163-183, and 203-225; these read FGALHFAIASVAVLLSALFVLLP, ARAGVAILFLRLGLMLCGTL, LPFHLCPAALISGSLYFI, IFFNLLYFWHFGSFVAVL, ILYAYLFMLTHCLEPAMVVFSLL, CAVLGFLLLAANALFWNRRLG, and FFVYQLLFVSALCLLMLVLYLPF.

It is found in the cell membrane. This is an uncharacterized protein from Treponema pallidum (strain Nichols).